We begin with the raw amino-acid sequence, 102 residues long: uncharacterized protein (102 aa).

The helical transmembrane segment at 7-23 (IVFVSCVILGLAACSSQ) threads the bilayer.

It is found in the membrane. This is an uncharacterized protein from Haemophilus influenzae (strain ATCC 51907 / DSM 11121 / KW20 / Rd).